A 141-amino-acid polypeptide reads, in one-letter code: ATP synthase epsilon chain (141 aa).

Belongs to the ATPase epsilon chain family. In terms of assembly, F-type ATPases have 2 components, CF(1) - the catalytic core - and CF(0) - the membrane proton channel. CF(1) has five subunits: alpha(3), beta(3), gamma(1), delta(1), epsilon(1). CF(0) has three main subunits: a, b and c.

The protein localises to the cell inner membrane. Functionally, produces ATP from ADP in the presence of a proton gradient across the membrane. The polypeptide is ATP synthase epsilon chain (Cellvibrio japonicus (strain Ueda107) (Pseudomonas fluorescens subsp. cellulosa)).